Consider the following 695-residue polypeptide: Threonine--tRNA ligase 1, cytoplasmic (695 aa).

The interval 1–21 (MSEEKASSPSGKMDGEKPLNP) is disordered. Positions 51 to 115 (DSKPIKVTLP…ETDCTLELLK (65 aa)) constitute a TGS domain. Position 215 is an N6-acetyllysine (Lys215). Residue Thr218 is modified to Phosphothreonine. Phosphotyrosine is present on Tyr270. Residue Thr425 is modified to Phosphothreonine.

Belongs to the class-II aminoacyl-tRNA synthetase family. Homodimer. In terms of processing, ISGylated.

It localises to the cytoplasm. The catalysed reaction is tRNA(Thr) + L-threonine + ATP = L-threonyl-tRNA(Thr) + AMP + diphosphate + H(+). Catalyzes the attachment of threonine to tRNA(Thr) in a two-step reaction: threonine is first activated by ATP to form Thr-AMP and then transferred to the acceptor end of tRNA(Thr). Also edits incorrectly charged tRNA(Thr) via its editing domain, at the post-transfer stage. In Rattus norvegicus (Rat), this protein is Threonine--tRNA ligase 1, cytoplasmic (Tars1).